The chain runs to 709 residues: Protein white (709 aa).

A disordered region spans residues 1–35 (MTINTDDQYADGESKTTISSNRRYSTSSFQDQSME). Positions 15-32 (KTTISSNRRYSTSSFQDQ) are enriched in polar residues. The region spanning 103-348 (FTRQRLVKDF…SQLGIPCPPN (246 aa)) is the ABC transporter domain. Residues 136–143 (GSSGAGKT) and 292–299 (GMAMKGKT) each bind ATP. A helical transmembrane segment spans residues 457-475 (LLQTAMVASLIGSIYFGQV). An N-linked (GlcNAc...) asparagine glycan is attached at asparagine 485. Helical transmembrane passes span 487 to 507 (SLFL…INVF), 537 to 555 (LPLF…YPMI), 564 to 585 (YLTT…GYLI), and 598 to 616 (VGPP…FLNS). Asparagine 658 is a glycosylation site (N-linked (GlcNAc...) asparagine). A helical membrane pass occupies residues 681-700 (LDIGCLFALIVLFRLGALFC).

Belongs to the ABC transporter superfamily. ABCG family. Eye pigment precursor importer (TC 3.A.1.204) subfamily.

It localises to the membrane. Functionally, may be part of a membrane-spanning permease system necessary for the transport of pigment precursors into pigment cells responsible for eye color. The protein is Protein white (W) of Anopheles albimanus (New world malaria mosquito).